Here is a 185-residue protein sequence, read N- to C-terminus: Elongation factor P (185 aa).

It belongs to the elongation factor P family.

The protein resides in the cytoplasm. The protein operates within protein biosynthesis; polypeptide chain elongation. Functionally, involved in peptide bond synthesis. Stimulates efficient translation and peptide-bond synthesis on native or reconstituted 70S ribosomes in vitro. Probably functions indirectly by altering the affinity of the ribosome for aminoacyl-tRNA, thus increasing their reactivity as acceptors for peptidyl transferase. The protein is Elongation factor P of Paraburkholderia xenovorans (strain LB400).